We begin with the raw amino-acid sequence, 371 residues long: Cytochrome b (371 aa).

4 helical membrane-spanning segments follow: residues 25–45, 69–90, 105–125, and 170–190; these read FGSMLLTCLALQTSTGFFLAI, WTMQNLHAIGASLFFMCIYTHI, WLSGTILLMLLMATAFFGYVL, and FFALHFILPFLIISLSSVHII. Histidine 75 and histidine 89 together coordinate heme b. Positions 174 and 188 each coordinate heme b. Histidine 193 provides a ligand contact to a ubiquinone. The next 4 membrane-spanning stretches (helical) occupy residues 218–238, 280–300, 312–332, and 339–358; these read YKDMLMTTIMITLLFIIMSFS, LGGTLALLMSIMILTTTPFTH, FTQLLFWTLIATFITITWTAT, and FILISQTASVIYFSFFIINP.

Belongs to the cytochrome b family. As to quaternary structure, the cytochrome bc1 complex contains 3 respiratory subunits (MT-CYB, CYC1 and UQCRFS1), 2 core proteins (UQCRC1 and UQCRC2) and probably 6 low-molecular weight proteins. Heme b serves as cofactor.

It is found in the mitochondrion inner membrane. In terms of biological role, component of the ubiquinol-cytochrome c reductase complex (complex III or cytochrome b-c1 complex) that is part of the mitochondrial respiratory chain. The b-c1 complex mediates electron transfer from ubiquinol to cytochrome c. Contributes to the generation of a proton gradient across the mitochondrial membrane that is then used for ATP synthesis. This is Cytochrome b (MT-CYB) from Elapognathus coronatus (Western crowned snake).